Consider the following 219-residue polypeptide: uncharacterized protein (219 aa).

Residue Asp-58 is part of the active site.

The protein belongs to the pseudouridine synthase RluA family.

The enzyme catalyses a uridine in RNA = a pseudouridine in RNA. This is an uncharacterized protein from Zymomonas mobilis subsp. mobilis (strain ATCC 31821 / ZM4 / CP4).